The following is a 350-amino-acid chain: DNA polymerase delta subunit 3 (350 aa).

The segment at 131 to 350 (EEKSKPLVRP…LESFFKRKAK (220 aa)) is disordered. 2 stretches are compositionally biased toward basic and acidic residues: residues 146 to 162 (TTPE…KDMG) and 172 to 195 (MKKD…EENL). At Thr-223 the chain carries Phosphothreonine. Ser-230 bears the Phosphoserine mark. Over residues 234–248 (SPKETDSNDKDKNND) the composition is skewed to basic and acidic residues. Positions 249 to 262 (DLEDLLETTAEDSL) are enriched in acidic residues. Over residues 274–286 (SETEHSKEPKSEE) the composition is skewed to basic and acidic residues. The span at 320–332 (LSSSKKQETPSSN) shows a compositional bias: polar residues.

As to quaternary structure, DNA polymerase delta is a heterotrimer of POL3, POL32 and HYS2. POL32 can form homodimers.

The protein localises to the nucleus. Functionally, DNA polymerase delta (DNA polymerase III) participates in chromosomal DNA replication. It is required during synthesis of the leading and lagging DNA strands at the replication fork and binds at/or near replication origins and moves along DNA with the replication fork. It has 3'-5' proofreading exonuclease activity that correct errors arising during DNA replication. It is also involved in DNA synthesis during DNA repair. In Saccharomyces cerevisiae (strain ATCC 204508 / S288c) (Baker's yeast), this protein is DNA polymerase delta subunit 3 (POL32).